We begin with the raw amino-acid sequence, 738 residues long: Translation initiation factor IF-2 (738 aa).

Positions 1 to 10 are enriched in polar residues; that stretch reads MNSMRISGHQ. Residues 1 to 150 are disordered; it reads MNSMRISGHQ…PTTVRAPVRP (150 aa). The span at 22-102 shows a compositional bias: gly residues; that stretch reads AGGGRGPGNP…GGRGPSGGRG (81 aa). Positions 103–120 are enriched in basic and acidic residues; sequence GDGRRREESPTDHEDGRI. The segment covering 121 to 143 has biased composition (low complexity); it reads NRSGRSTSTTTTRTSSTLARPTT. A tr-type G domain is found at 238–405; sequence PRPPVVTIMG…MILLVADLNE (168 aa). The G1 stretch occupies residues 247-254; it reads GHVDHGKT. 247–254 is a GTP binding site; it reads GHVDHGKT. The segment at 272-276 is G2; it reads GITQH. The segment at 293–296 is G3; it reads DTPG. Residues 293-297 and 347-350 each bind GTP; these read DTPGH and NKID. Residues 347–350 form a G4 region; it reads NKID. The tract at residues 383-385 is G5; sequence SAK.

It belongs to the TRAFAC class translation factor GTPase superfamily. Classic translation factor GTPase family. IF-2 subfamily.

The protein localises to the cytoplasm. Its function is as follows. One of the essential components for the initiation of protein synthesis. Protects formylmethionyl-tRNA from spontaneous hydrolysis and promotes its binding to the 30S ribosomal subunits. Also involved in the hydrolysis of GTP during the formation of the 70S ribosomal complex. The protein is Translation initiation factor IF-2 of Roseiflexus castenholzii (strain DSM 13941 / HLO8).